The sequence spans 137 residues: Small ribosomal subunit protein uS12 (137 aa).

Positions 1–28 (MPTINQLVRKPRKSKAKKSDSPALNKGF) are disordered. Aspartate 102 bears the 3-methylthioaspartic acid mark.

It belongs to the universal ribosomal protein uS12 family. In terms of assembly, part of the 30S ribosomal subunit. Contacts proteins S8 and S17. May interact with IF1 in the 30S initiation complex.

In terms of biological role, with S4 and S5 plays an important role in translational accuracy. Its function is as follows. Interacts with and stabilizes bases of the 16S rRNA that are involved in tRNA selection in the A site and with the mRNA backbone. Located at the interface of the 30S and 50S subunits, it traverses the body of the 30S subunit contacting proteins on the other side and probably holding the rRNA structure together. The combined cluster of proteins S8, S12 and S17 appears to hold together the shoulder and platform of the 30S subunit. This chain is Small ribosomal subunit protein uS12, found in Staphylococcus carnosus (strain TM300).